The chain runs to 541 residues: Chaperonin GroEL (541 aa).

Residues 29 to 32 (TLGP), 86 to 90 (DGTTT), Gly-413, 478 to 480 (NAA), and Asp-494 each bind ATP.

Belongs to the chaperonin (HSP60) family. As to quaternary structure, forms a cylinder of 14 subunits composed of two heptameric rings stacked back-to-back. Interacts with the co-chaperonin GroES.

It localises to the cytoplasm. It carries out the reaction ATP + H2O + a folded polypeptide = ADP + phosphate + an unfolded polypeptide.. Its function is as follows. Together with its co-chaperonin GroES, plays an essential role in assisting protein folding. The GroEL-GroES system forms a nano-cage that allows encapsulation of the non-native substrate proteins and provides a physical environment optimized to promote and accelerate protein folding. The polypeptide is Chaperonin GroEL (Agathobacter rectalis (strain ATCC 33656 / DSM 3377 / JCM 17463 / KCTC 5835 / VPI 0990) (Eubacterium rectale)).